A 244-amino-acid polypeptide reads, in one-letter code: Fumarate reductase iron-sulfur subunit (244 aa).

Y14 is a binding site for a menaquinone. Positions 16 to 97 (PEVDTAPHSA…GMKVEALANF (82 aa)) constitute a 2Fe-2S ferredoxin-type domain. C58, C63, C66, and C78 together coordinate [2Fe-2S] cluster. The 4Fe-4S ferredoxin-type domain occupies 140–169 (MAKYHQFSGCINCGLCYAACPQFGLNPEFI). C149, C152, and C155 together coordinate [4Fe-4S] cluster. The [3Fe-4S] cluster site is built by C159, C205, and C211. Position 215 (C215) interacts with [4Fe-4S] cluster. A menaquinone is bound at residue 226–229 (QQGK).

Belongs to the succinate dehydrogenase/fumarate reductase iron-sulfur protein family. Fumarate dehydrogenase forms part of an enzyme complex containing four subunits: a flavoprotein, an iron-sulfur, and two hydrophobic anchor proteins. [2Fe-2S] cluster serves as cofactor. Requires [3Fe-4S] cluster as cofactor. The cofactor is [4Fe-4S] cluster.

It localises to the cell inner membrane. The catalysed reaction is a quinone + succinate = fumarate + a quinol. It carries out the reaction a menaquinone + succinate = a menaquinol + fumarate. Two distinct, membrane-bound, FAD-containing enzymes are responsible for the catalysis of fumarate and succinate interconversion; the fumarate reductase is used in anaerobic growth, and the succinate dehydrogenase is used in aerobic growth. The polypeptide is Fumarate reductase iron-sulfur subunit (frdB) (Escherichia coli O157:H7).